Here is a 178-residue protein sequence, read N- to C-terminus: 2-C-methyl-D-erythritol 2,4-cyclodiphosphate synthase (178 aa).

Positions 24, 26, and 61 each coordinate a divalent metal cation. Position 24–26 (24–26 (DSH)) interacts with 4-CDP-2-C-methyl-D-erythritol 2-phosphate. 4-CDP-2-C-methyl-D-erythritol 2-phosphate is bound at residue 150 to 153 (TSGE).

It belongs to the IspF family. In terms of assembly, homotrimer. The cofactor is a divalent metal cation.

It carries out the reaction 4-CDP-2-C-methyl-D-erythritol 2-phosphate = 2-C-methyl-D-erythritol 2,4-cyclic diphosphate + CMP. It participates in isoprenoid biosynthesis; isopentenyl diphosphate biosynthesis via DXP pathway; isopentenyl diphosphate from 1-deoxy-D-xylulose 5-phosphate: step 4/6. Its function is as follows. Involved in the biosynthesis of isopentenyl diphosphate (IPP) and dimethylallyl diphosphate (DMAPP), two major building blocks of isoprenoid compounds. Catalyzes the conversion of 4-diphosphocytidyl-2-C-methyl-D-erythritol 2-phosphate (CDP-ME2P) to 2-C-methyl-D-erythritol 2,4-cyclodiphosphate (ME-CPP) with a corresponding release of cytidine 5-monophosphate (CMP). The polypeptide is 2-C-methyl-D-erythritol 2,4-cyclodiphosphate synthase (Chlamydia trachomatis serovar L2b (strain UCH-1/proctitis)).